Here is a 540-residue protein sequence, read N- to C-terminus: Peptide chain release factor 3 (540 aa).

The 270-residue stretch at 14-283 (NQRRNFAIIS…AFLDYALKPI (270 aa)) folds into the tr-type G domain. GTP contacts are provided by residues 23 to 30 (SHPDAGKT), 91 to 95 (DTPGH), and 145 to 148 (NKLD).

The protein belongs to the TRAFAC class translation factor GTPase superfamily. Classic translation factor GTPase family. PrfC subfamily.

The protein localises to the cytoplasm. In terms of biological role, increases the formation of ribosomal termination complexes and stimulates activities of RF-1 and RF-2. It binds guanine nucleotides and has strong preference for UGA stop codons. It may interact directly with the ribosome. The stimulation of RF-1 and RF-2 is significantly reduced by GTP and GDP, but not by GMP. This Gloeothece citriformis (strain PCC 7424) (Cyanothece sp. (strain PCC 7424)) protein is Peptide chain release factor 3.